A 275-amino-acid chain; its full sequence is Autophagy protein 5 (275 aa).

Methionine 1 is modified (N-acetylmethionine). Lysine 130 participates in a covalent cross-link: Glycyl lysine isopeptide (Lys-Gly) (interchain with G-Cter in ATG12).

This sequence belongs to the ATG5 family. Forms a conjugate with ATG12. Part of the minor complex composed of 4 sets of ATG12-ATG5 and ATG16L1 (400 kDa); this complex interacts with ATG3 leading to disruption of ATG7 interaction and promotion of ATG8-like proteins lipidation. Forms an 800-kDa complex composed of ATG12-ATG5 and ATG16L2. The ATG12-ATG5 conjugate interacts with RAB33A; this interaction is bridged by ATG16L1 and promotes ATG12-ATG5-ATG16L1 complex recruitment to phagophores. Interacts with TECPR1; the interaction is direct and does not take place when ATG16L1 is associated with the ATG5-ATG12 conjugate. Interacts with DHX58/RIG-1, IFIH1/MDA5 and MAVS/IPS-1 in monomeric form as well as in ATG12-ATG5 conjugate form. The interaction with MAVS is further enhanced upon vesicular stomatitis virus (VSV) infection. Interacts with ATG3. Interacts with ATG7 and ATG10. Interacts with FADD. Interacts with Bassoon/BSN; this interaction is important for the regulation of presynaptic autophagy. Interacts with ATG16L2. In terms of processing, conjugated to ATG12; which is essential for autophagy, but is not required for association with isolation membrane. Post-translationally, acetylated by EP300.

The protein localises to the cytoplasm. It localises to the preautophagosomal structure membrane. Its function is as follows. Involved in autophagic vesicle formation. Conjugation with ATG12, through a ubiquitin-like conjugating system involving ATG7 as an E1-like activating enzyme and ATG10 as an E2-like conjugating enzyme, is essential for its function. The ATG12-ATG5 conjugate acts as an E3-like enzyme which is required for lipidation of ATG8 family proteins and their association to the vesicle membranes. Involved in mitochondrial quality control after oxidative damage, and in subsequent cellular longevity. Plays a critical role in multiple aspects of lymphocyte development and is essential for both B and T lymphocyte survival and proliferation. Required for optimal processing and presentation of antigens for MHC II. Involved in the maintenance of axon morphology and membrane structures, as well as in normal adipocyte differentiation. Promotes primary ciliogenesis through removal of OFD1 from centriolar satellites and degradation of IFT20 via the autophagic pathway. As part of the ATG8 conjugation system with ATG12 and ATG16L1, required for recruitment of LRRK2 to stressed lysosomes and induction of LRRK2 kinase activity in response to lysosomal stress. May play an important role in the apoptotic process, possibly within the modified cytoskeleton. Its expression is a relatively late event in the apoptotic process, occurring downstream of caspase activity. Plays a crucial role in IFN-gamma-induced autophagic cell death by interacting with FADD. This Sus scrofa (Pig) protein is Autophagy protein 5.